Consider the following 390-residue polypeptide: Succinyl-diaminopimelate desuccinylase 1 (390 aa).

His76 lines the Zn(2+) pocket. Asp78 is an active-site residue. Zn(2+) is bound at residue Asp109. The active-site Proton acceptor is Glu143. Glu144, Glu172, and His363 together coordinate Zn(2+).

The protein belongs to the peptidase M20A family. DapE subfamily. In terms of assembly, homodimer. The cofactor is Zn(2+). Co(2+) is required as a cofactor.

The enzyme catalyses N-succinyl-(2S,6S)-2,6-diaminopimelate + H2O = (2S,6S)-2,6-diaminopimelate + succinate. It participates in amino-acid biosynthesis; L-lysine biosynthesis via DAP pathway; LL-2,6-diaminopimelate from (S)-tetrahydrodipicolinate (succinylase route): step 3/3. Functionally, catalyzes the hydrolysis of N-succinyl-L,L-diaminopimelic acid (SDAP), forming succinate and LL-2,6-diaminopimelate (DAP), an intermediate involved in the bacterial biosynthesis of lysine and meso-diaminopimelic acid, an essential component of bacterial cell walls. This Alteromonas mediterranea (strain DSM 17117 / CIP 110805 / LMG 28347 / Deep ecotype) protein is Succinyl-diaminopimelate desuccinylase 1.